The following is a 59-amino-acid chain: Large ribosomal subunit protein bL32 (59 aa).

Residues 1–21 are disordered; sequence MAVPKKKSSKSKGRSRAAHHA.

This sequence belongs to the bacterial ribosomal protein bL32 family.

The sequence is that of Large ribosomal subunit protein bL32 from Magnetococcus marinus (strain ATCC BAA-1437 / JCM 17883 / MC-1).